The sequence spans 208 residues: Large ribosomal subunit protein uL3 (208 aa).

Residues Lys122–Ala148 form a disordered region.

This sequence belongs to the universal ribosomal protein uL3 family. Part of the 50S ribosomal subunit. Forms a cluster with proteins L14 and L19.

One of the primary rRNA binding proteins, it binds directly near the 3'-end of the 23S rRNA, where it nucleates assembly of the 50S subunit. The protein is Large ribosomal subunit protein uL3 of Streptococcus pyogenes serotype M1.